We begin with the raw amino-acid sequence, 189 residues long: Signal peptidase complex catalytic subunit sec11 (189 aa).

Topologically, residues 1-8 (MQKLSFRQ) are cytoplasmic. Residues 9–25 (GLAQILNLLLVLSSAYM) traverse the membrane as a helical; Signal-anchor for type II membrane protein segment. The Lumenal portion of the chain corresponds to 26–189 (GYKTLSFVTD…LLTLIQKEEQ (164 aa)). Catalysis depends on charge relay system residues serine 47 and histidine 104. The N-linked (GlcNAc...) asparagine glycan is linked to asparagine 114. Catalysis depends on aspartate 129, which acts as the Charge relay system. Positions 173 to 184 (IMLGGLGLLTLI) are C-terminal short (CTS) helix.

Belongs to the peptidase S26B family. As to quaternary structure, component of the signal peptidase complex (SPC) composed of a catalytic subunit sec11 and three accessory subunits spc1, spc2 and spc3. The complex induces a local thinning of the ER membrane which is used to measure the length of the signal peptide (SP) h-region of protein substrates. This ensures the selectivity of the complex towards h-regions shorter than 18-20 amino acids. SPC associates with the translocon complex.

It is found in the endoplasmic reticulum membrane. It carries out the reaction Cleavage of hydrophobic, N-terminal signal or leader sequences from secreted and periplasmic proteins.. Its function is as follows. Catalytic component of the signal peptidase complex (SPC) which catalyzes the cleavage of N-terminal signal sequences from nascent proteins as they are translocated into the lumen of the endoplasmic reticulum. Specifically cleaves N-terminal signal peptides that contain a hydrophobic alpha-helix (h-region) shorter than 18-20 amino acids. The polypeptide is Signal peptidase complex catalytic subunit sec11 (sec11) (Schizosaccharomyces pombe (strain 972 / ATCC 24843) (Fission yeast)).